The chain runs to 76 residues: uncharacterized protein (76 aa).

2 consecutive transmembrane segments (helical) span residues 9–29 (AIGI…LQAV) and 45–65 (LLMI…FLDY).

Its subcellular location is the cell membrane. This is an uncharacterized protein from Bacillus subtilis (strain 168).